Consider the following 160-residue polypeptide: Ureidoglycolate lyase (160 aa).

It belongs to the ureidoglycolate lyase family. Homodimer. Requires Ni(2+) as cofactor.

The catalysed reaction is (S)-ureidoglycolate = urea + glyoxylate. The protein operates within nitrogen metabolism; (S)-allantoin degradation. Catalyzes the catabolism of the allantoin degradation intermediate (S)-ureidoglycolate, generating urea and glyoxylate. Involved in the anaerobic utilization of allantoin as sole nitrogen source. Reinforces the induction of genes involved in the degradation of allantoin and glyoxylate by producing glyoxylate. This Escherichia coli O139:H28 (strain E24377A / ETEC) protein is Ureidoglycolate lyase.